Here is a 196-residue protein sequence, read N- to C-terminus: MSFIRSALAAAAFVALSIGAVQTASAADPENTVILKLKDGDVALELRPDLAPKHVAQIKKLVREGAYNGVAFHRVIPGFMAQTGDVKFGNMDKGFDAARVGTGGSNYPDLPAEFSKEPFVRGTVGMARSQNPNSANSQFFIMFDDGPFLNGQYTVVGKVVSGMDAVDKIKKGSEAENGAVKNPDKIIKATIEADTK.

The first 26 residues, 1–26 (MSFIRSALAAAAFVALSIGAVQTASA), serve as a signal peptide directing secretion. The 166-residue stretch at 29–194 (PENTVILKLK…KIIKATIEAD (166 aa)) folds into the PPIase cyclophilin-type domain.

It belongs to the cyclophilin-type PPIase family.

The protein localises to the periplasm. The enzyme catalyses [protein]-peptidylproline (omega=180) = [protein]-peptidylproline (omega=0). In terms of biological role, PPIases accelerate the folding of proteins. It catalyzes the cis-trans isomerization of proline imidic peptide bonds in oligopeptides. This chain is Probable peptidyl-prolyl cis-trans isomerase (ppi), found in Brucella melitensis biotype 1 (strain ATCC 23456 / CCUG 17765 / NCTC 10094 / 16M).